Here is a 518-residue protein sequence, read N- to C-terminus: Forkhead box protein H1 (518 aa).

The segment at 72 to 113 is disordered; it reads GSMYGLSPGTHEGSCTHTHEGPKDSMAGDQTRSRKSKKKNYH. The span at 104-113 shows a compositional bias: basic residues; the sequence is SRKSKKKNYH. The fork-head DNA-binding region spans 117 to 213; it reads KPPYSYLAMI…MKLQNTALTR (97 aa). The tract at residues 318-397 is disordered; the sequence is KPTRNARSPG…NYSPIEPPKK (80 aa). Positions 329 to 346 are enriched in low complexity; that stretch reads STIHSTYSSSSSSISTIS. The tract at residues 380–506 is SMAD-interaction domain (SID); that stretch reads TSSDPDTGNY…PSFLSQCLGS (127 aa). The Fast/FoxH1 motif 1 (FM1) signature appears at 405–409; that stretch reads LPTSY. The Fast/FoxH1 motif 2 (FM2) signature appears at 415 to 421; the sequence is PNVVAPP. The short motif at 470–491 is the SMAD interaction motif (SIM) element; sequence LDNMLRAMPPNKSVFDVLTSHP.

As to quaternary structure, ARF1 contains 2 smad2s, 1 smad4 and 1 foxh1/fast-1 protein. Interaction with smad4 is most likely indirect through interaction with the MH2 domain of smad2. Binds to the MH2 domain of smad3, which can incorporate into the ARF1 complex. The ARF1 and ARF2 complexes are activated by distinct TGF-beta family members; formation of ARF1 is promoted by activin. Interacts (via Fork-head domain) with gtf2ird1/wbscr11 (via repeats 4-5). Highly expressed in the animal cap (prospective ectoderm) and prospective mesoderm of stage 10.25 embryos.

The protein resides in the nucleus. In terms of biological role, transcriptional activator. Recognizes and binds to the DNA sequence 5'-TGT[GT][GT]ATT-3'. Upon TGF-beta induction, forms a transcriptionally active complex with smad2 and smad4 called activin-responsive factor 1 (ARF1), which binds a site on the mix-B/mix.2 promoter called the activin response element (ARE). Binds to activated smads and the ARE with much lower affinity than fast3. Necessary for the first steps in mesoderm specification, directly inducing mesodermal genes. Acts with fast3 to control the convergent extension movements of gastrulation. Binds to the proximal element (PE) of the gsc gene and cooperates with gtf2ird1/wbscr11 and SMAD proteins to regulate gsc transcription. The protein is Forkhead box protein H1 (foxh1) of Xenopus laevis (African clawed frog).